A 327-amino-acid chain; its full sequence is Elongation factor P--(R)-beta-lysine ligase (327 aa).

Position 78 to 80 (78 to 80) interacts with substrate; the sequence is SPE. ATP is bound by residues 102 to 104 and N111; that span reads RNQ. Y120 serves as a coordination point for substrate. 246-247 is an ATP binding site; the sequence is EL. A substrate-binding site is contributed by E253. Residue G302 participates in ATP binding.

This sequence belongs to the class-II aminoacyl-tRNA synthetase family. EpmA subfamily. As to quaternary structure, homodimer.

The catalysed reaction is D-beta-lysine + L-lysyl-[protein] + ATP = N(6)-((3R)-3,6-diaminohexanoyl)-L-lysyl-[protein] + AMP + diphosphate + H(+). Functionally, with EpmB is involved in the beta-lysylation step of the post-translational modification of translation elongation factor P (EF-P). Catalyzes the ATP-dependent activation of (R)-beta-lysine produced by EpmB, forming a lysyl-adenylate, from which the beta-lysyl moiety is then transferred to the epsilon-amino group of a conserved specific lysine residue in EF-P. The protein is Elongation factor P--(R)-beta-lysine ligase of Baumannia cicadellinicola subsp. Homalodisca coagulata.